A 355-amino-acid chain; its full sequence is 3-isopropylmalate dehydrogenase (355 aa).

Residue 77-90 (GAKWDNLPREKRPE) participates in NAD(+) binding. 4 residues coordinate substrate: R97, R107, R135, and D220. Mg(2+)-binding residues include D220, D244, and D248. Position 277–289 (277–289 (GSAPDIAGQGIAN)) interacts with NAD(+).

It belongs to the isocitrate and isopropylmalate dehydrogenases family. LeuB type 1 subfamily. In terms of assembly, homodimer. It depends on Mg(2+) as a cofactor. Requires Mn(2+) as cofactor.

It is found in the cytoplasm. It catalyses the reaction (2R,3S)-3-isopropylmalate + NAD(+) = 4-methyl-2-oxopentanoate + CO2 + NADH. It functions in the pathway amino-acid biosynthesis; L-leucine biosynthesis; L-leucine from 3-methyl-2-oxobutanoate: step 3/4. Functionally, catalyzes the oxidation of 3-carboxy-2-hydroxy-4-methylpentanoate (3-isopropylmalate) to 3-carboxy-4-methyl-2-oxopentanoate. The product decarboxylates to 4-methyl-2 oxopentanoate. This chain is 3-isopropylmalate dehydrogenase, found in Sulfurimonas denitrificans (strain ATCC 33889 / DSM 1251) (Thiomicrospira denitrificans (strain ATCC 33889 / DSM 1251)).